The sequence spans 113 residues: U11-theraphotoxin-Hhn1a (113 aa).

An N-terminal signal peptide occupies residues 1-21 (MNTVRVTFLLVFVLAVSLGQA). Positions 22 to 74 (DKDENRMEMQEKTEQGKSYLDFAENLLLQKLEELEAKLLEEDSEESRNSRQKR) are excised as a propeptide. The segment at 61-83 (EEDSEESRNSRQKRCIGEGVPCD) is disordered. 3 cysteine pairs are disulfide-bonded: C75/C90, C82/C95, and C89/C110.

It belongs to the neurotoxin 14 (magi-1) family. 01 (HNTX-16) subfamily. As to expression, expressed by the venom gland.

The protein localises to the secreted. Its function is as follows. Probable ion channel inhibitor. The chain is U11-theraphotoxin-Hhn1a from Cyriopagopus hainanus (Chinese bird spider).